The sequence spans 730 residues: Ribosomal RNA large subunit methyltransferase K/L (730 aa).

The region spanning 46 to 157 (TAYRLCLWSR…RGEAILSLDL (112 aa)) is the THUMP domain. The span at 399-408 (AAVEEGEPRR) shows a compositional bias: basic and acidic residues. A disordered region spans residues 399–418 (AAVEEGEPRRQAPVASEPAR).

Belongs to the methyltransferase superfamily. RlmKL family.

Its subcellular location is the cytoplasm. The catalysed reaction is guanosine(2445) in 23S rRNA + S-adenosyl-L-methionine = N(2)-methylguanosine(2445) in 23S rRNA + S-adenosyl-L-homocysteine + H(+). The enzyme catalyses guanosine(2069) in 23S rRNA + S-adenosyl-L-methionine = N(2)-methylguanosine(2069) in 23S rRNA + S-adenosyl-L-homocysteine + H(+). Functionally, specifically methylates the guanine in position 2445 (m2G2445) and the guanine in position 2069 (m7G2069) of 23S rRNA. The sequence is that of Ribosomal RNA large subunit methyltransferase K/L from Pseudomonas entomophila (strain L48).